Consider the following 279-residue polypeptide: Oxygen-dependent coproporphyrinogen-III oxidase (279 aa).

A substrate-binding site is contributed by Ser-102. A divalent metal cation-binding residues include His-106 and His-116. The Proton donor role is filled by His-116. 118–120 (NTR) contacts substrate. A divalent metal cation contacts are provided by His-149 and His-179. The segment at 244-279 (YVEFNLLYDRGTKFGLMTDGNVEAILMSLPPVVKFN) is important for dimerization.

Belongs to the aerobic coproporphyrinogen-III oxidase family. As to quaternary structure, homodimer. A divalent metal cation serves as cofactor.

It is found in the cytoplasm. It catalyses the reaction coproporphyrinogen III + O2 + 2 H(+) = protoporphyrinogen IX + 2 CO2 + 2 H2O. Its pathway is porphyrin-containing compound metabolism; protoporphyrin-IX biosynthesis; protoporphyrinogen-IX from coproporphyrinogen-III (O2 route): step 1/1. Its function is as follows. Involved in the heme biosynthesis. Catalyzes the aerobic oxidative decarboxylation of propionate groups of rings A and B of coproporphyrinogen-III to yield the vinyl groups in protoporphyrinogen-IX. This chain is Oxygen-dependent coproporphyrinogen-III oxidase, found in Rickettsia prowazekii (strain Madrid E).